The chain runs to 220 residues: 5-hmdU DNA kinase 1 (220 aa).

The protein belongs to the thymidylate kinase family. 5-hmdU DNA kinase subfamily.

The catalysed reaction is 5-hydroxymethyl-dUMP in DNA + ATP = 5-phosphomethyl-dUMP in DNA + ADP + H(+). Functionally, phosphorylates 5-hydroxymethyluracil (5hmdU) into 5-phosphomethyl-2'-deoxyuridine (5- PmdU) on DNA as a step in the pathway leading to thymidine hypermodifications in the viral genome. The phosphate is added internally to the DNA polymer. As a final result of the pathway of hypermodification, 5-aminoethoxy-2'-deoxymethyluridine (5-NeOmdU) substitutes for about 40% of the thymidines in the viral DNA. These modifications probably prevent degradation of viral genome by the host restriction-modification antiviral defense system. This Salmonella phage ViI protein is 5-hmdU DNA kinase 1.